Consider the following 525-residue polypeptide: MATLLRSKLTNVATSVSNKSQAKVSGMFARMGFQAATDEEAVGFAHCDDLDFEHRQGLQMDILKSEGEPCGDEGAEAPVEGDIHYQRGGAPLPPSGSKDQAVGAGGEFGGHDKPKITAWEAGWNVTNAIQGMFVLGLPYAILHGGYLGLFLIIFAAVVCCYTGKILIACLYEENEDGEVVRVRDSYVAIANACCAPRFPTLGGRVVNVAQIIELVMTCILYVVVSGNLMYNSFPGLPVSQKSWSIIATAVLLPCAFLKNLKAVSKFSLLCTLAHFVINILVIAYCLSRARDWAWEKVKFYIDVKKFPISIGIIVFSYTSQIFLPSLEGNMQQPSEFHCMMNWTHIAACVLKGLFALVAYLTWADETKEVITDNLPGSIRAVVNLFLVAKALLSYPLPFFAAVEVLEKSLFQEGSRAFFPACYGGDGRLKSWGLTLRCALVVFTLLMAIYVPHFALLMGLTGSLTGAGLCFLLPSLFHLRLLWRKLLWHQVFFDVAIFVIGGICSVSGFVHSLEGLIEAYRTNAED.

Residues 1 to 132 (MATLLRSKLT…WNVTNAIQGM (132 aa)) lie on the Cytoplasmic side of the membrane. The chain crosses the membrane as a helical span at residues 133–153 (FVLGLPYAILHGGYLGLFLII). Over 154-204 (FAAVVCCYTGKILIACLYEENEDGEVVRVRDSYVAIANACCAPRFPTLGGR) the chain is Lumenal, vesicle. The residue at position 186 (tyrosine 186) is a 3'-nitrotyrosine. The helical transmembrane segment at 205-225 (VVNVAQIIELVMTCILYVVVS) threads the bilayer. Over 226-265 (GNLMYNSFPGLPVSQKSWSIIATAVLLPCAFLKNLKAVSK) the chain is Cytoplasmic. Residues 266 to 286 (FSLLCTLAHFVINILVIAYCL) traverse the membrane as a helical segment. Topologically, residues 287–305 (SRARDWAWEKVKFYIDVKK) are lumenal, vesicle. A helical membrane pass occupies residues 306–326 (FPISIGIIVFSYTSQIFLPSL). Topologically, residues 327-341 (EGNMQQPSEFHCMMN) are cytoplasmic. A helical membrane pass occupies residues 342–362 (WTHIAACVLKGLFALVAYLTW). The Lumenal, vesicle portion of the chain corresponds to 363-383 (ADETKEVITDNLPGSIRAVVN). A helical transmembrane segment spans residues 384–404 (LFLVAKALLSYPLPFFAAVEV). The Cytoplasmic portion of the chain corresponds to 405-438 (LEKSLFQEGSRAFFPACYGGDGRLKSWGLTLRCA). Residues 439–459 (LVVFTLLMAIYVPHFALLMGL) traverse the membrane as a helical segment. Residues 460-461 (TG) lie on the Lumenal, vesicle side of the membrane. The chain crosses the membrane as a helical span at residues 462–482 (SLTGAGLCFLLPSLFHLRLLW). Residues 483 to 489 (RKLLWHQ) lie on the Cytoplasmic side of the membrane. A helical transmembrane segment spans residues 490–510 (VFFDVAIFVIGGICSVSGFVH). Topologically, residues 511 to 525 (SLEGLIEAYRTNAED) are lumenal, vesicle.

This sequence belongs to the amino acid/polyamine transporter 2 family. Brain and retina. Localized in horizontal cell tips at both rod and cone terminals.

It localises to the cytoplasmic vesicle membrane. The protein localises to the presynapse. The enzyme catalyses 4-aminobutanoate(out) + n H(+)(in) = 4-aminobutanoate(in) + n H(+)(out). It catalyses the reaction glycine(out) + n H(+)(in) = glycine(in) + n H(+)(out). It carries out the reaction beta-alanine(out) + n H(+)(in) = beta-alanine(in) + n H(+)(out). Chloride ions activate 4-aminobutanoate/H(+) transport. Its function is as follows. Antiporter that exchanges vesicular protons for cytosolic 4-aminobutanoate or to a lesser extend glycine, thus allowing their secretion from nerve terminals. The transport is equally dependent on the chemical and electrical components of the proton gradient. May also transport beta-alanine. Acidification of GABAergic synaptic vesicles is a prerequisite for 4-aminobutanoate uptake. The polypeptide is Vesicular inhibitory amino acid transporter (Mus musculus (Mouse)).